The chain runs to 353 residues: Putative permease PerM (353 aa).

The next 7 helical transmembrane spans lie at 19-39, 72-92, 156-176, 217-237, 240-260, 281-301, and 310-330; these read IALL…SGLL, IVLV…LPIA, LVGL…VFFL, VLEM…FGLN, LLLA…AFVV, CFAV…PVLF, and LVII…GVFF.

The protein belongs to the autoinducer-2 exporter (AI-2E) (TC 2.A.86) family.

It localises to the cell membrane. In Escherichia coli O157:H7, this protein is Putative permease PerM (perM).